Consider the following 85-residue polypeptide: U4-theraphotoxin-Hhn1m (85 aa).

The first 22 residues, 1-22 (MKVTLIAILTCAAVLVLHTTAA), serve as a signal peptide directing secretion. Positions 23–48 (EELEAESQLVEVGMPDTELAAVDEER) are excised as a propeptide. 3 disulfide bridges follow: Cys52–Cys66, Cys56–Cys77, and Cys71–Cys82.

This sequence belongs to the neurotoxin 12 (Hwtx-2) family. 02 (Hwtx-2) subfamily. In terms of tissue distribution, expressed by the venom gland.

It is found in the secreted. Postsynaptic neurotoxin. This chain is U4-theraphotoxin-Hhn1m, found in Cyriopagopus hainanus (Chinese bird spider).